The primary structure comprises 402 residues: Endo-polygalacturonase (402 aa).

The signal sequence occupies residues 1 to 23 (MEYQSGKRVLSLSLGLIGLFSAS). 2 disulfide bridges follow: cysteine 41/cysteine 62 and cysteine 115/cysteine 125. Aspartate 249 acts as the Proton donor in catalysis. Histidine 277 is a catalytic residue.

This sequence belongs to the glycosyl hydrolase 28 family. In terms of assembly, monomer.

The protein localises to the secreted. The enzyme catalyses (1,4-alpha-D-galacturonosyl)n+m + H2O = (1,4-alpha-D-galacturonosyl)n + (1,4-alpha-D-galacturonosyl)m.. Functionally, involved in maceration and soft-rotting of plant tissue. The sequence is that of Endo-polygalacturonase (pehA) from Pectobacterium parmentieri.